The chain runs to 336 residues: USG-1 protein homolog (336 aa).

It belongs to the aspartate-semialdehyde dehydrogenase family.

The protein is USG-1 protein homolog (usg) of Pseudomonas aeruginosa (strain ATCC 15692 / DSM 22644 / CIP 104116 / JCM 14847 / LMG 12228 / 1C / PRS 101 / PAO1).